Reading from the N-terminus, the 242-residue chain is Anamorsin homolog (242 aa).

The tract at residues 1 to 140 (MMNFADTLVI…NVTAENPDFL (140 aa)) is N-terminal SAM-like domain. Residues 140-159 (LSNEDDNDEHSSDGEAHENA) form a disordered region. The linker stretch occupies residues 141 to 162 (SNEDDNDEHSSDGEAHENAEDN). Basic and acidic residues predominate over residues 148-159 (EHSSDGEAHENA). Residues Cys-205, Cys-208, Cys-216, and Cys-219 each contribute to the [4Fe-4S] cluster site. Short sequence motifs (cx2C motif) lie at residues 205 to 208 (CGNC) and 216 to 219 (CASC). The fe-S binding site B stretch occupies residues 205–219 (CGNCYLGDAFRCASC).

The protein belongs to the anamorsin family. In terms of assembly, monomer. The cofactor is [4Fe-4S] cluster.

The protein resides in the cytoplasm. The protein localises to the mitochondrion intermembrane space. Its function is as follows. Component of the cytosolic iron-sulfur (Fe-S) protein assembly (CIA) machinery. Required for the maturation of extramitochondrial Fe-S proteins. Part of an electron transfer chain functioning in an early step of cytosolic Fe-S biogenesis, facilitating the de novo assembly of a [4Fe-4S] cluster on the cytosolic Fe-S scaffold complex. Electrons are transferred from NADPH via a FAD- and FMN-containing diflavin oxidoreductase. Together with the diflavin oxidoreductase, also required for the assembly of the diferric tyrosyl radical cofactor of ribonucleotide reductase (RNR), probably by providing electrons for reduction during radical cofactor maturation in the catalytic small subunit. In Plasmodium vivax (strain Salvador I), this protein is Anamorsin homolog.